Reading from the N-terminus, the 166-residue chain is Thioredoxin, mitochondrial (166 aa).

The N-terminal 59 residues, 1 to 59 (MAQRLLLRRFLTSIISGKPSQSRWAPVASRALQTPQYSPGYLTVTPSQARSIYTTRVCS), are a transit peptide targeting the mitochondrion. The Thioredoxin domain maps to 61–166 (TFNIQDGPDF…LEAFLKKLIG (106 aa)). Active-site nucleophile residues include cysteine 90 and cysteine 93. A disulfide bridge connects residues cysteine 90 and cysteine 93. Lysine 152 carries the N6-acetyllysine; alternate modification. At lysine 152 the chain carries N6-succinyllysine; alternate.

Belongs to the thioredoxin family. In terms of assembly, monomer.

It localises to the mitochondrion. In terms of biological role, important for the control of mitochondrial reactive oxygen species homeostasis, apoptosis regulation and cell viability. Is involved in various redox reactions including the reduction of protein disulfide bonds, through the reversible oxidation of its active center dithiol to a disulfide. The chain is Thioredoxin, mitochondrial (TXN2) from Bos taurus (Bovine).